The following is a 241-amino-acid chain: U2 small nuclear ribonucleoprotein B'' (241 aa).

The 80-residue stretch at 12–91 (QTLYVNNLYE…RPMKIQYCKS (80 aa)) folds into the RRM 1 domain. A compositionally biased stretch (basic and acidic residues) spans 99–126 (LDGTYMEKKREREENDKKGSNKKQDRKS). Residues 99–169 (LDGTYMEKKR…PRDDPPNKTL (71 aa)) are disordered. Over residues 129–152 (QQQQQQKRPGAPTSTTSTTSPTTS) the composition is skewed to low complexity. One can recognise an RRM 2 domain in the interval 167 to 241 (KTLFVENLPD…KPMVVSFAAQ (75 aa)).

This sequence belongs to the RRM U1 A/B'' family. In terms of assembly, identified in the spliceosome B complex. Identified in the spliceosome C complex.

It is found in the nucleus. In terms of biological role, involved in pre-mRNA splicing as component of the spliceosome. Associated with sn-RNP U2, where it contributes to the binding of stem loop IV of U2 snRNA. This Dictyostelium discoideum (Social amoeba) protein is U2 small nuclear ribonucleoprotein B'' (snrpb2).